Here is a 371-residue protein sequence, read N- to C-terminus: Germination protease (371 aa).

Positions 1 to 16 (MEKQKLDLSAYQIRTD) are excised as a propeptide.

It belongs to the peptidase A25 family. As to quaternary structure, homotetramer. In terms of processing, autoproteolytically processed. The inactive tetrameric zymogen termed p46 autoprocesses to a smaller form termed p41, which is active only during spore germination.

The catalysed reaction is Endopeptidase action with P4 Glu or Asp, P1 preferably Glu &gt; Asp, P1' hydrophobic and P2' Ala.. Initiates the rapid degradation of small, acid-soluble proteins during spore germination. The protein is Germination protease of Bacillus pumilus (strain SAFR-032).